The following is a 339-amino-acid chain: Nucleoid-associated protein Asuc_0779 (339 aa).

This sequence belongs to the YejK family.

The protein localises to the cytoplasm. It is found in the nucleoid. This Actinobacillus succinogenes (strain ATCC 55618 / DSM 22257 / CCUG 43843 / 130Z) protein is Nucleoid-associated protein Asuc_0779.